Consider the following 76-residue polypeptide: DNA-directed RNA polymerase subunit Rpo10 (76 aa).

Zn(2+)-binding residues include Cys-16, Cys-19, Cys-53, and Cys-54.

Belongs to the archaeal Rpo10/eukaryotic RPB10 RNA polymerase subunit family. In terms of assembly, part of the RNA polymerase complex. Zn(2+) serves as cofactor.

Its subcellular location is the cytoplasm. It catalyses the reaction RNA(n) + a ribonucleoside 5'-triphosphate = RNA(n+1) + diphosphate. Functionally, DNA-dependent RNA polymerase (RNAP) catalyzes the transcription of DNA into RNA using the four ribonucleoside triphosphates as substrates. The sequence is that of DNA-directed RNA polymerase subunit Rpo10 from Archaeoglobus fulgidus (strain ATCC 49558 / DSM 4304 / JCM 9628 / NBRC 100126 / VC-16).